The following is a 434-amino-acid chain: 3-phosphoshikimate 1-carboxyvinyltransferase (434 aa).

The 3-phosphoshikimate site is built by K22, S23, and R27. K22 provides a ligand contact to phosphoenolpyruvate. The phosphoenolpyruvate site is built by G93 and R121. Residues S168, S169, Q170, S199, D320, and K347 each coordinate 3-phosphoshikimate. A phosphoenolpyruvate-binding site is contributed by Q170. The Proton acceptor role is filled by D320. R351, R394, and K419 together coordinate phosphoenolpyruvate.

It belongs to the EPSP synthase family. As to quaternary structure, monomer.

The protein localises to the cytoplasm. It carries out the reaction 3-phosphoshikimate + phosphoenolpyruvate = 5-O-(1-carboxyvinyl)-3-phosphoshikimate + phosphate. The protein operates within metabolic intermediate biosynthesis; chorismate biosynthesis; chorismate from D-erythrose 4-phosphate and phosphoenolpyruvate: step 6/7. In terms of biological role, catalyzes the transfer of the enolpyruvyl moiety of phosphoenolpyruvate (PEP) to the 5-hydroxyl of shikimate-3-phosphate (S3P) to produce enolpyruvyl shikimate-3-phosphate and inorganic phosphate. The chain is 3-phosphoshikimate 1-carboxyvinyltransferase from Paraburkholderia phytofirmans (strain DSM 17436 / LMG 22146 / PsJN) (Burkholderia phytofirmans).